A 385-amino-acid chain; its full sequence is Probable caffeine synthase 3 (385 aa).

7 residues coordinate S-adenosyl-L-homocysteine: tyrosine 18, cysteine 62, asparagine 67, aspartate 101, leucine 102, serine 140, and phenylalanine 141. Residues tyrosine 158, glutamine 161, and phenylalanine 162 each contribute to the caffeine site. Asparagine 179 contacts Mg(2+). Threonine 238 contacts caffeine. The Mg(2+) site is built by aspartate 261, phenylalanine 263, and asparagine 264. Residue tyrosine 369 coordinates caffeine.

It belongs to the methyltransferase superfamily. Type-7 methyltransferase family. Mg(2+) is required as a cofactor. In terms of tissue distribution, expressed in roots, stems, young and old leaves.

The protein operates within alkaloid biosynthesis. Its function is as follows. May be involved in the biosynthesis of caffeine. This Coffea arabica (Arabian coffee) protein is Probable caffeine synthase 3.